The sequence spans 152 residues: Endoribonuclease YbeY (152 aa).

His117, His121, and His127 together coordinate Zn(2+).

This sequence belongs to the endoribonuclease YbeY family. The cofactor is Zn(2+).

The protein localises to the cytoplasm. In terms of biological role, single strand-specific metallo-endoribonuclease involved in late-stage 70S ribosome quality control and in maturation of the 3' terminus of the 16S rRNA. This is Endoribonuclease YbeY from Sulfurihydrogenibium sp. (strain YO3AOP1).